A 276-amino-acid chain; its full sequence is Large ribosomal subunit protein uL2 (276 aa).

The disordered stretch occupies residues 226 to 276 (MNSVDHPHGGGEGKTSGGRHPVSPWGTPTKGYKTRSNKRTDKLILRHRNKG).

Belongs to the universal ribosomal protein uL2 family. In terms of assembly, part of the 50S ribosomal subunit. Forms a bridge to the 30S subunit in the 70S ribosome.

In terms of biological role, one of the primary rRNA binding proteins. Required for association of the 30S and 50S subunits to form the 70S ribosome, for tRNA binding and peptide bond formation. It has been suggested to have peptidyltransferase activity; this is somewhat controversial. Makes several contacts with the 16S rRNA in the 70S ribosome. This chain is Large ribosomal subunit protein uL2, found in Vesicomyosocius okutanii subsp. Calyptogena okutanii (strain HA).